The chain runs to 629 residues: tRNA uridine 5-carboxymethylaminomethyl modification enzyme MnmG (629 aa).

Residues glycine 13–glycine 18, valine 125, and serine 180 each bind FAD. Residue glycine 273 to phenylalanine 287 coordinates NAD(+). Glutamine 370 lines the FAD pocket.

Belongs to the MnmG family. Homodimer. Heterotetramer of two MnmE and two MnmG subunits. The cofactor is FAD.

The protein resides in the cytoplasm. Its function is as follows. NAD-binding protein involved in the addition of a carboxymethylaminomethyl (cmnm) group at the wobble position (U34) of certain tRNAs, forming tRNA-cmnm(5)s(2)U34. The sequence is that of tRNA uridine 5-carboxymethylaminomethyl modification enzyme MnmG from Salmonella paratyphi A (strain ATCC 9150 / SARB42).